The following is a 341-amino-acid chain: UDP-3-O-(3-hydroxymyristoyl)glucosamine N-acyltransferase (341 aa).

Histidine 239 functions as the Proton acceptor in the catalytic mechanism.

Belongs to the transferase hexapeptide repeat family. LpxD subfamily. Homotrimer.

The catalysed reaction is a UDP-3-O-[(3R)-3-hydroxyacyl]-alpha-D-glucosamine + a (3R)-hydroxyacyl-[ACP] = a UDP-2-N,3-O-bis[(3R)-3-hydroxyacyl]-alpha-D-glucosamine + holo-[ACP] + H(+). It carries out the reaction UDP-3-O-[(3R)-3-hydroxytetradecanoyl]-alpha-D-glucosamine + (3R)-hydroxytetradecanoyl-[ACP] = UDP-2-N,3-O-bis[(3R)-3-hydroxytetradecanoyl]-alpha-D-glucosamine + holo-[ACP] + H(+). It functions in the pathway glycolipid biosynthesis; lipid IV(A) biosynthesis; lipid IV(A) from (3R)-3-hydroxytetradecanoyl-[acyl-carrier-protein] and UDP-N-acetyl-alpha-D-glucosamine: step 3/6. Its function is as follows. Catalyzes the N-acylation of UDP-3-O-(hydroxytetradecanoyl)glucosamine using 3-hydroxytetradecanoyl-ACP as the acyl donor. Is involved in the biosynthesis of lipid A, a phosphorylated glycolipid that anchors the lipopolysaccharide to the outer membrane of the cell. This Salmonella paratyphi A (strain ATCC 9150 / SARB42) protein is UDP-3-O-(3-hydroxymyristoyl)glucosamine N-acyltransferase.